The following is a 688-amino-acid chain: Two-component response regulator ORR23 (688 aa).

One can recognise a Response regulatory domain in the interval 25-140 (RVLAVDDDPV…ELRNIWQHVI (116 aa)). Residue Asp-76 is modified to 4-aspartylphosphate. The tract at residues 161-212 (PPNADSDHVHGHVTCGSPDQSGRPSKKRKEYCSEEEDEGEVNTQDIDDPSAP) is disordered. A compositionally biased stretch (acidic residues) spans 193–208 (SEEEDEGEVNTQDIDD). Positions 211 to 270 (APKKPRVVWSVELHRKFVAAVNQLGIDKAVPKRILELMNVEKLTRENVASHLQKYRLYLK) form a DNA-binding region, myb-like GARP.

Belongs to the ARR family. Type-B subfamily. Two-component system major event consists of a His-to-Asp phosphorelay between a sensor histidine kinase (HK) and a response regulator (RR). In plants, the His-to-Asp phosphorelay involves an additional intermediate named Histidine-containing phosphotransfer protein (HPt). This multistep phosphorelay consists of a His-Asp-His-Asp sequential transfer of a phosphate group between first a His and an Asp of the HK protein, followed by the transfer to a conserved His of the HPt protein and finally the transfer to an Asp in the receiver domain of the RR protein.

It is found in the nucleus. In terms of biological role, transcriptional activator that binds specific DNA sequence. Functions as a response regulator involved in His-to-Asp phosphorelay signal transduction system. Phosphorylation of the Asp residue in the receiver domain activates the ability of the protein to promote the transcription of target genes. May directly activate some type-A response regulators in response to cytokinins. The sequence is that of Two-component response regulator ORR23 from Oryza sativa subsp. japonica (Rice).